The sequence spans 480 residues: F-box/LRR-repeat protein 14 (480 aa).

The F-box domain maps to 11 to 58; sequence DRQMDELPDHLVWDILSKLHTTDDRNSLSLSCKRFFSLDNEQRYSLRI. LRR repeat units lie at residues 61–86, 94–119, 120–144, 145–170, 171–196, 197–222, 229–257, 258–283, 284–309, 322–347, 355–379, 380–404, 405–429, 430–454, and 455–480; these read GLVP…EIIY, GKQV…TLSF, CTFI…KLNF, APRI…HLIR, CLNV…CIKN, CRAI…QFEV, MKVY…SLGN, CIIA…HLDM, CTGV…SLRV, TLRL…KISF, LFSF…SLDH, VCVF…ELVH, CQEV…KLSK, CLGV…VVED, and CPQV…SWMY.

This Arabidopsis thaliana (Mouse-ear cress) protein is F-box/LRR-repeat protein 14 (FBL14).